The primary structure comprises 375 residues: Queuine tRNA-ribosyltransferase (375 aa).

Aspartate 89 acts as the Proton acceptor in catalysis. Substrate-binding positions include 89–93 (DSGGF), aspartate 143, glutamine 187, and glycine 214. The segment at 245–251 (GVGKPED) is RNA binding. The active-site Nucleophile is aspartate 264. The segment at 269-273 (TRNAR) is RNA binding; important for wobble base 34 recognition. Cysteine 302, cysteine 304, cysteine 307, and histidine 333 together coordinate Zn(2+).

Belongs to the queuine tRNA-ribosyltransferase family. As to quaternary structure, homodimer. Within each dimer, one monomer is responsible for RNA recognition and catalysis, while the other monomer binds to the replacement base PreQ1. It depends on Zn(2+) as a cofactor.

It catalyses the reaction 7-aminomethyl-7-carbaguanine + guanosine(34) in tRNA = 7-aminomethyl-7-carbaguanosine(34) in tRNA + guanine. Its pathway is tRNA modification; tRNA-queuosine biosynthesis. Functionally, catalyzes the base-exchange of a guanine (G) residue with the queuine precursor 7-aminomethyl-7-deazaguanine (PreQ1) at position 34 (anticodon wobble position) in tRNAs with GU(N) anticodons (tRNA-Asp, -Asn, -His and -Tyr). Catalysis occurs through a double-displacement mechanism. The nucleophile active site attacks the C1' of nucleotide 34 to detach the guanine base from the RNA, forming a covalent enzyme-RNA intermediate. The proton acceptor active site deprotonates the incoming PreQ1, allowing a nucleophilic attack on the C1' of the ribose to form the product. After dissociation, two additional enzymatic reactions on the tRNA convert PreQ1 to queuine (Q), resulting in the hypermodified nucleoside queuosine (7-(((4,5-cis-dihydroxy-2-cyclopenten-1-yl)amino)methyl)-7-deazaguanosine). This chain is Queuine tRNA-ribosyltransferase, found in Escherichia coli O81 (strain ED1a).